The chain runs to 692 residues: DNA-binding protein RFX2 (692 aa).

Positions 1–26 are disordered; the sequence is MQNSEGGADSPATVALRPAAQPVPAS. Residue S26 is modified to Phosphoserine. Positions 169–244 form a DNA-binding region, RFX-type winged-helix; that stretch reads TLQWLLDNYE…YHYYGIRLKP (76 aa). Positions 261 to 296 are disordered; the sequence is RQQPTHQKPRYRPAQKSDSLGDGSAHSNMHSTPEQA. Polar residues predominate over residues 285 to 294; it reads AHSNMHSTPE. Phosphoserine is present on S386. Residues 660–685 show a composition bias toward basic and acidic residues; the sequence is DGHSSEADVDGRSLGEPLVKRERSDP. The disordered stretch occupies residues 660–692; the sequence is DGHSSEADVDGRSLGEPLVKRERSDPSHPLQGI.

Belongs to the RFX family. Homodimer; probably only forms homodimers in testis. Heterodimer; heterodimerizes with RFX1 and RFX3. Expressed at highest level in testis. Expressed at lower level in thymus. Also expressed in stomach, kidney, liver, brain and heart. Weakly expressed in spleen and lung. Within testis, most abundantly present in spermatocytes: present from pachytene spermatocytes to early spermatids (at protein level). Also present in non-germinal tissues.

Its subcellular location is the nucleus. The protein localises to the cytoplasm. Its function is as follows. Transcription factor that acts as a key regulator of spermatogenesis. Acts by regulating expression of genes required for the haploid phase during spermiogenesis, such as genes required for cilium assembly and function. Recognizes and binds the X-box, a regulatory motif with DNA sequence 5'-GTNRCC(0-3N)RGYAAC-3' present on promoters. Probably activates transcription of the testis-specific histone gene H1-6. This is DNA-binding protein RFX2 (Rfx2) from Rattus norvegicus (Rat).